A 325-amino-acid polypeptide reads, in one-letter code: Zinc-type alcohol dehydrogenase-like protein C337.11 (325 aa).

It belongs to the zinc-containing alcohol dehydrogenase family. Quinone oxidoreductase subfamily.

The protein resides in the cytoplasm. The protein localises to the nucleus. The protein is Zinc-type alcohol dehydrogenase-like protein C337.11 of Schizosaccharomyces pombe (strain 972 / ATCC 24843) (Fission yeast).